We begin with the raw amino-acid sequence, 490 residues long: UDP-N-acetylmuramate--L-alanine ligase (490 aa).

130 to 136 (GTHGKTT) lines the ATP pocket.

Belongs to the MurCDEF family.

It localises to the cytoplasm. The enzyme catalyses UDP-N-acetyl-alpha-D-muramate + L-alanine + ATP = UDP-N-acetyl-alpha-D-muramoyl-L-alanine + ADP + phosphate + H(+). It functions in the pathway cell wall biogenesis; peptidoglycan biosynthesis. Its function is as follows. Cell wall formation. This Idiomarina loihiensis (strain ATCC BAA-735 / DSM 15497 / L2-TR) protein is UDP-N-acetylmuramate--L-alanine ligase.